A 456-amino-acid polypeptide reads, in one-letter code: Na(+)/H(+) antiporter NhaA 3 (456 aa).

The next 11 membrane-spanning stretches (helical) occupy residues 32-52 (IEAT…TLSN), 87-107 (GLMT…VVLG), 114-134 (MVAL…GLYL), 145-165 (GWGV…ALLG), 174-194 (VFLL…VAVG), 202-222 (TALA…LLGV), 233-253 (AIIW…GVIL), 318-338 (WVAF…PITI), 347-367 (LAVM…FAWL), 382-402 (WGGL…ALFI), and 417-437 (LGIL…LCAL).

This sequence belongs to the NhaA Na(+)/H(+) (TC 2.A.33) antiporter family.

Its subcellular location is the cell inner membrane. The catalysed reaction is Na(+)(in) + 2 H(+)(out) = Na(+)(out) + 2 H(+)(in). In terms of biological role, na(+)/H(+) antiporter that extrudes sodium in exchange for external protons. The protein is Na(+)/H(+) antiporter NhaA 3 of Acidiphilium cryptum (strain JF-5).